A 77-amino-acid chain; its full sequence is Small ribosomal subunit protein bS18 (77 aa).

The protein belongs to the bacterial ribosomal protein bS18 family. Part of the 30S ribosomal subunit. Forms a tight heterodimer with protein bS6.

Binds as a heterodimer with protein bS6 to the central domain of the 16S rRNA, where it helps stabilize the platform of the 30S subunit. This is Small ribosomal subunit protein bS18 from Lactobacillus gasseri (strain ATCC 33323 / DSM 20243 / BCRC 14619 / CIP 102991 / JCM 1131 / KCTC 3163 / NCIMB 11718 / NCTC 13722 / AM63).